A 379-amino-acid polypeptide reads, in one-letter code: DNA replication and repair protein RecF (379 aa).

ATP is bound at residue Gly30–Thr37.

It belongs to the RecF family.

Its subcellular location is the cytoplasm. Its function is as follows. The RecF protein is involved in DNA metabolism; it is required for DNA replication and normal SOS inducibility. RecF binds preferentially to single-stranded, linear DNA. It also seems to bind ATP. The protein is DNA replication and repair protein RecF of Ligilactobacillus salivarius (strain UCC118) (Lactobacillus salivarius).